A 500-amino-acid polypeptide reads, in one-letter code: Zinc finger protein 689 (500 aa).

The interval 1-24 (MAPPSAPLLEQAPGEVGPTRRRGR) is disordered. Positions 29 to 100 (LKFADVAVYF…AALDPQEYRR (72 aa)) constitute a KRAB domain. Residues 110 to 144 (TRQKNEEKEVFPPKDVPRKGKRGRKPSKPRLIARQ) form a disordered region. Basic and acidic residues predominate over residues 112–127 (QKNEEKEVFPPKDVPR). Basic residues predominate over residues 128–137 (KGKRGRKPSK). A C2H2-type 1; degenerate zinc finger spans residues 149 to 171 (PICPDCGCTFPDLPALESHKCAQ). 10 C2H2-type zinc fingers span residues 177-199 (YPCP…RRAH), 205-227 (YVCD…QVIH), 233-255 (YHCP…RTTH), 261-283 (HQCP…QRTH), 289-311 (YTCL…QRIH), 317-339 (YPCP…RRVH), 345-367 (YACE…QLLH), 373-395 (YPCP…RSTH), 401-423 (HACD…RRVH), and 429-451 (YACD…QLLH). Residue Lys-455 forms a Glycyl lysine isopeptide (Lys-Gly) (interchain with G-Cter in SUMO2) linkage. The segment at 457–482 (FPCLECGRCFRQRWSLAVHKCCPNTH) adopts a C2H2-type 12 zinc-finger fold.

The protein belongs to the krueppel C2H2-type zinc-finger protein family.

The protein resides in the nucleus. May be involved in transcriptional regulation. The polypeptide is Zinc finger protein 689 (Znf689) (Rattus norvegicus (Rat)).